The following is a 298-amino-acid chain: Tryptophan 2,3-dioxygenase (298 aa).

Substrate-binding positions include 51–55 (FIIQH), Y113, and R117. Residue H240 coordinates heme. Residue T254 coordinates substrate.

Belongs to the tryptophan 2,3-dioxygenase family. As to quaternary structure, homotetramer. Heme is required as a cofactor.

It carries out the reaction L-tryptophan + O2 = N-formyl-L-kynurenine. The protein operates within amino-acid degradation; L-tryptophan degradation via kynurenine pathway; L-kynurenine from L-tryptophan: step 1/2. Functionally, heme-dependent dioxygenase that catalyzes the oxidative cleavage of the L-tryptophan (L-Trp) pyrrole ring and converts L-tryptophan to N-formyl-L-kynurenine. Catalyzes the oxidative cleavage of the indole moiety. The chain is Tryptophan 2,3-dioxygenase from Xanthomonas euvesicatoria pv. vesicatoria (strain 85-10) (Xanthomonas campestris pv. vesicatoria).